The sequence spans 188 residues: MATYYSNDFRAGLKIMLDGEPYAVEASEFVKPGKGQAFARVKLRRLLTGTRVEKTFKSTDSAEGADVVDMNLTYLYNDGEFWHFMNNETFEQLSADAKAIGDNAKWLLDQAECIVTLWNGQPISVTPPNFVELEIVDTDPGLKGDTAGTGGKPATLSTGAVVKVPLFVQIGEVIKVDTRSGEYVSRVK.

An N6-(3,6-diaminohexanoyl)-5-hydroxylysine modification is found at Lys-34.

This sequence belongs to the elongation factor P family. Post-translationally, is beta-lysylated on the epsilon-amino group of Lys-34 by the combined action of EpmA and EpmB, and then hydroxylated on the C5 position of the same residue by EpmC. Lysylation is critical for the stimulatory effect of EF-P on peptide-bond formation. The lysylation moiety would extend toward the peptidyltransferase center and stabilize the terminal 3-CCA end of the tRNA. The hydroxylation of the C5 position on Lys-34 would allow additional potential stabilizing hydrogen-bond interactions with the P-tRNA.

Its subcellular location is the cytoplasm. Its pathway is protein biosynthesis; polypeptide chain elongation. In terms of biological role, involved in peptide bond synthesis. Alleviates ribosome stalling that occurs when 3 or more consecutive Pro residues or the sequence PPG is present in a protein, possibly by augmenting the peptidyl transferase activity of the ribosome. Modification of Lys-34 is required for alleviation. The polypeptide is Elongation factor P (Shigella boydii serotype 18 (strain CDC 3083-94 / BS512)).